The following is a 321-amino-acid chain: Probable arabinan endo-1,5-alpha-L-arabinosidase A (321 aa).

A signal peptide spans 1–19 (MSASVFVVVASCLAALAHG). Asp34 functions as the Proton acceptor in the catalytic mechanism. Catalysis depends on Glu200, which acts as the Proton donor.

It belongs to the glycosyl hydrolase 43 family.

It is found in the secreted. It carries out the reaction Endohydrolysis of (1-&gt;5)-alpha-arabinofuranosidic linkages in (1-&gt;5)-arabinans.. The protein operates within glycan metabolism; L-arabinan degradation. Functionally, endo-1,5-alpha-L-arabinanase involved in degradation of pectin. Its preferred substrate is linear 1,5-alpha-L-arabinan. The sequence is that of Probable arabinan endo-1,5-alpha-L-arabinosidase A (abnA) from Aspergillus fumigatus (strain ATCC MYA-4609 / CBS 101355 / FGSC A1100 / Af293) (Neosartorya fumigata).